Reading from the N-terminus, the 754-residue chain is Peptidyl-prolyl cis-trans isomerase G (754 aa).

A PPIase cyclophilin-type domain is found at 11-176 (FFDIAINNQP…AEVRILSCGE (166 aa)). Residues 182 to 193 (KVKKEEKKRHKS) show a composition bias toward basic residues. The interval 182-754 (KVKKEEKKRH…SPGTDEDKSG (573 aa)) is disordered. The segment covering 194–216 (SSSSSSSSSDSDSSSDSQSSSDS) has biased composition (low complexity). A compositionally biased stretch (basic residues) spans 228–253 (KKRKKKHRKNSRKHKKEKKKRKKSKK). Ser-254, Ser-256, Ser-257, Ser-259, and Ser-290 each carry phosphoserine. Residues 292–310 (PKADEKERKNREREREREC) are compositionally biased toward basic and acidic residues. Ser-315 is subject to Phosphoserine. Over residues 329-347 (SGRKIKGRGPRRYRTPSRS) the composition is skewed to basic residues. 2 stretches are compositionally biased toward basic and acidic residues: residues 348-368 (RSRD…EMQR) and 379-449 (RWIK…DKYK). Ser-356 is modified (phosphoserine). A Phosphothreonine modification is found at Thr-358. Phosphoserine is present on Ser-386. A Glycyl lysine isopeptide (Lys-Gly) (interchain with G-Cter in SUMO2) cross-link involves residue Lys-392. Residues Ser-397, Ser-413, and Ser-415 each carry the phosphoserine modification. A compositionally biased stretch (basic residues) spans 450 to 462 (NKVKKRAKSKSRS). Composition is skewed to basic and acidic residues over residues 463–553 (KSKE…DITK) and 578–599 (RTHD…QEYR). A compositionally biased stretch (basic residues) spans 616 to 627 (SRSKDRRRRRRD). Residues 628–686 (SRSSEREESQSRNKDKYRNQESKSSHRKENSESEKRMYSKSRDHNSSNNSREKKADRDQ) are compositionally biased toward basic and acidic residues. Residues Ser-687 and Ser-690 each carry the phosphoserine modification. Polar residues predominate over residues 687–698 (SPFSKIKQSSQD). A Glycyl lysine isopeptide (Lys-Gly) (interchain with G-Cter in SUMO2) cross-link involves residue Lys-693. Phosphoserine is present on residues Ser-696, Ser-744, and Ser-745. Residues 707 to 754 (KNKEDEKIRSSVEKENQKSKGQENDHVHEKNKKFDHESSPGTDEDKSG) show a composition bias toward basic and acidic residues. Position 748 is a phosphothreonine (Thr-748). Residue Ser-753 is modified to Phosphoserine.

As to quaternary structure, interacts with CLK1, PNN and with the phosphorylated C-terminal domain of RNA polymerase II. In terms of tissue distribution, ubiquitous.

The protein resides in the nucleus matrix. The protein localises to the nucleus speckle. The catalysed reaction is [protein]-peptidylproline (omega=180) = [protein]-peptidylproline (omega=0). Inhibited by cyclosporin A (CsA). Functionally, PPIase that catalyzes the cis-trans isomerization of proline imidic peptide bonds in oligopeptides and may therefore assist protein folding. May be implicated in the folding, transport, and assembly of proteins. May play an important role in the regulation of pre-mRNA splicing. This Homo sapiens (Human) protein is Peptidyl-prolyl cis-trans isomerase G (PPIG).